We begin with the raw amino-acid sequence, 591 residues long: Nuclear receptor subfamily 4 group A member 2 (591 aa).

Disordered regions lie at residues 1 to 22 and 110 to 133; these read MPCVQAQYGSSPQGASPASQSY and SEEMMSHSGSVYYKPSSPPTSSTP. Residues 8 to 22 show a composition bias toward low complexity; it reads YGSSPQGASPASQSY. The nuclear receptor DNA-binding region spans 253 to 328; the sequence is EGLCAVCGDN…VGMVKEVVRT (76 aa). NR C4-type zinc fingers lie at residues 256-276 and 292-311; these read CAVCGDNAACQHYGVRTCEGC and CLANKNCPVDKRRRNRCQYC. Positions 280 to 307 match the Bipartite nuclear localization signal (NLS1) motif; that stretch reads FKRTVQKNAKYVCLANKNCPVDKRRRNR. The tract at residues 330–354 is disordered; it reads SLKGRRGRLPSKPKSPQEPSPPSPP. Positions 331–343 match the Nuclear localization signal (NLS1) motif; the sequence is LKGRRGRLPSKPK. Pro residues predominate over residues 345–354; that stretch reads PQEPSPPSPP. Positions 353-588 constitute an NR LBD domain; that stretch reads PPVSLISALV…AIIDKLFLDT (236 aa). A nuclear export sequence (NES1) motif is present at residues 436–445; sequence FLELFVLRLA. The short motif at 561-570 is the nuclear export sequence (NES2) element; that stretch reads QGLQRIFYLK.

The protein belongs to the nuclear hormone receptor family.

The protein localises to the cytoplasm. Its subcellular location is the nucleus. Its function is as follows. Transcriptional regulator which may play a role in the differentiation and maintenance of meso-diencephalic dopaminergic (mdDA) neurons. In Xenopus tropicalis (Western clawed frog), this protein is Nuclear receptor subfamily 4 group A member 2 (nr4a2).